The following is a 309-amino-acid chain: MDALKSAGRAIIRSPSIAKQSWGGGKHKKLPENWTDTRETLLEGMLFHLKYLGMTLVEQPKGEELSATAVKRIVATAKASGKKLQKVLLKVSPRGIILYDSASNQLIENVSIYRISYCTADKMHDKVFAYIAQSQQNETLECHAFLCTKRKMAQAVTLTVAQAFKVAFEFWQVSRENKDKREKSGSDGEGASSSQSDGSSSITSLKASASANLLDFEDCTKAFDVLNASDNHIEDLFRQNSTNENNNIVWELDDGLDEAFARLAESRTNPQVLDIGLTANDLQSEECLSPTSWDKLELNPAEADELFMF.

The region spanning 41–195 (LLEGMLFHLK…SDGEGASSSQ (155 aa)) is the PID domain. Residues 179-201 (DKREKSGSDGEGASSSQSDGSSS) are disordered. Residues 189 to 201 (EGASSSQSDGSSS) are compositionally biased toward low complexity. A Clathrin box motif is present at residues 213-217 (LLDFE). Residues 250-277 (WELDDGLDEAFARLAESRTNPQVLDIGL) form an AP-2 complex binding region. The [DE]-X(1,2)-F-X-X-[FL]-X-X-X-R motif signature appears at 258–267 (EAFARLAESR).

As to quaternary structure, interacts (via PID domain) with ldlr (via NPXY motif). Binds to soluble clathrin trimers and to the adapter protein complex 2 (AP-2, beta 2 subunit). Binds to phosphoinositides, which regulate clathrin bud assembly at the cell surface. Interacts with the VLDL receptor (vldlr). Interacts with the vitellogenin receptor. In terms of tissue distribution, expressed at high level during oogenesis and embryogenesis. Found at low level in the adult liver and spleen. Found at very low level in testis and heart. Not found in the oocyte vegetal cortex.

It localises to the cytoplasm. Functionally, adapter protein (clathrin-associated sorting protein (CLASP)) required for efficient endocytosis of the LDL receptor (LDLR). Also involved in the vitellogenin receptor mediated endocytosis of nutrients during oogenesis. The polypeptide is Low density lipoprotein receptor adapter protein 1-B (Xenopus laevis (African clawed frog)).